The chain runs to 439 residues: Serine--tRNA ligase (439 aa).

T242 to E244 is an L-serine binding site. R273–E275 provides a ligand contact to ATP. Residue E296 participates in L-serine binding. E360–S363 provides a ligand contact to ATP. An L-serine-binding site is contributed by S396.

It belongs to the class-II aminoacyl-tRNA synthetase family. Type-1 seryl-tRNA synthetase subfamily. In terms of assembly, homodimer. The tRNA molecule binds across the dimer.

The protein localises to the cytoplasm. It catalyses the reaction tRNA(Ser) + L-serine + ATP = L-seryl-tRNA(Ser) + AMP + diphosphate + H(+). The catalysed reaction is tRNA(Sec) + L-serine + ATP = L-seryl-tRNA(Sec) + AMP + diphosphate + H(+). Its pathway is aminoacyl-tRNA biosynthesis; selenocysteinyl-tRNA(Sec) biosynthesis; L-seryl-tRNA(Sec) from L-serine and tRNA(Sec): step 1/1. Functionally, catalyzes the attachment of serine to tRNA(Ser). Is also able to aminoacylate tRNA(Sec) with serine, to form the misacylated tRNA L-seryl-tRNA(Sec), which will be further converted into selenocysteinyl-tRNA(Sec). The protein is Serine--tRNA ligase of Oenococcus oeni (strain ATCC BAA-331 / PSU-1).